The primary structure comprises 332 residues: MLLLTLASHSSLQILHGAKREGFETGIVVNGKREGFYRRFSFIDNFYVYSSEDEAVEKINGTSNSVFVPHGSLIEYIGMERVSRIRTPIFGNRNLFPWESNQSKKMKLLELSNIKTPMKFENPEDVDRMVIVKLPGAKGGRGYFIGRNKQEVKEGIRRLQEKGLINNVEELIIQEYVIGIPMYFQFFYSPMLQRVEMTGIDIRYETNVDGLRRLPSDIKAEPTFVVAGNIPAVARESILPSVYEYAENFVKTTKNVVPPGAIGPFCLESIVTDTLDVVVFEFSGRIVAGTNLYVDGSPYSWLYWDEPMSVGRRIGREINLAIQKNRLNEVTT.

Positions 9 and 72 each coordinate 5-amino-1-(5-phospho-beta-D-ribosyl)imidazole-4-carboxamide. The ATP-grasp domain maps to 93-323; it reads RNLFPWESNQ…IGREINLAIQ (231 aa). ATP-binding positions include 123–183 and Glu205; that span reads PEDV…IPMY. Asn229 serves as a coordination point for 5-amino-1-(5-phospho-beta-D-ribosyl)imidazole-4-carboxamide. Residues Glu268 and Glu281 each coordinate Mg(2+).

Belongs to the phosphohexose mutase family. Mg(2+) serves as cofactor. Requires Mn(2+) as cofactor.

The enzyme catalyses 5-amino-1-(5-phospho-beta-D-ribosyl)imidazole-4-carboxamide + formate + ATP = 5-formamido-1-(5-phospho-D-ribosyl)imidazole-4-carboxamide + ADP + phosphate. It functions in the pathway purine metabolism; IMP biosynthesis via de novo pathway; 5-formamido-1-(5-phospho-D-ribosyl)imidazole-4-carboxamide from 5-amino-1-(5-phospho-D-ribosyl)imidazole-4-carboxamide (formate route): step 1/1. Catalyzes the ATP- and formate-dependent formylation of 5-aminoimidazole-4-carboxamide-1-beta-d-ribofuranosyl 5'-monophosphate (AICAR) to 5-formaminoimidazole-4-carboxamide-1-beta-d-ribofuranosyl 5'-monophosphate (FAICAR) in the absence of folates. This chain is 5-formaminoimidazole-4-carboxamide-1-(beta)-D-ribofuranosyl 5'-monophosphate synthetase, found in Metallosphaera sedula (strain ATCC 51363 / DSM 5348 / JCM 9185 / NBRC 15509 / TH2).